The primary structure comprises 885 residues: DDT domain-containing protein DDB_G0282237 (885 aa).

The WAC domain occupies 20–125 (EEYFVIKFTK…GEIVSFKKAN (106 aa)). Disordered regions lie at residues 141 to 184 (ESDE…INAL), 201 to 264 (DDEN…SVRK), and 367 to 431 (LEDT…KENE). The segment covering 154–180 (SSSSSSTTTTTTTPTTPPTTTTTTSSS) has biased composition (low complexity). Residues 210 to 264 (KNNGDTSSDKKGEKEKEKEKEKEKEKEKEKEKEKEKEKEKEKEKEKDSDTKSVRK) are compositionally biased toward basic and acidic residues. Positions 217–260 (SDKKGEKEKEKEKEKEKEKEKEKEKEKEKEKEKEKEKEKDSDTK) form a coiled coil. Positions 367–379 (LEDTEEESVDIES) are enriched in acidic residues. Positions 380 to 396 (NDNSNSNGNSNSNNNLD) are enriched in low complexity. A DDT domain is found at 443–503 (SNTFGDFLMV…MKTIFTLPSY (61 aa)). The stretch at 530–565 (FQNEVKRIAIEEKEKQEKLKQLEEQNIRMLNLANEL) forms a coiled coil. 2 disordered regions span residues 562–632 (ANEL…WKEE) and 707–744 (KQDD…QKKP). The span at 567 to 577 (GSDDEDDEMKL) shows a compositional bias: acidic residues. A compositionally biased stretch (basic and acidic residues) spans 578-603 (DEDGNEIKKDVEMKDNDGTKDTKKDD). Coiled-coil stretches lie at residues 593-628 (NDGT…GEEE) and 674-782 (ASEK…RDRN). Composition is skewed to acidic residues over residues 604 to 631 (EENE…EWKE) and 715 to 729 (AEDD…EEQQ).

Its subcellular location is the nucleus. The chain is DDT domain-containing protein DDB_G0282237 from Dictyostelium discoideum (Social amoeba).